Reading from the N-terminus, the 222-residue chain is Ribonuclease T (222 aa).

The 175-residue stretch at Val20–Phe194 folds into the Exonuclease domain. Asp23, Glu25, His181, and Asp186 together coordinate Mg(2+). The Proton donor/acceptor role is filled by His181.

This sequence belongs to the RNase T family. Homodimer. Mg(2+) serves as cofactor.

Functionally, trims short 3' overhangs of a variety of RNA species, leaving a one or two nucleotide 3' overhang. Responsible for the end-turnover of tRNA: specifically removes the terminal AMP residue from uncharged tRNA (tRNA-C-C-A). Also appears to be involved in tRNA biosynthesis. The chain is Ribonuclease T from Shewanella sp. (strain MR-4).